Here is a 209-residue protein sequence, read N- to C-terminus: Thymidylate kinase (209 aa).

10-17 (GLEGAGKS) is an ATP binding site.

The protein belongs to the thymidylate kinase family.

The catalysed reaction is dTMP + ATP = dTDP + ADP. Functionally, phosphorylation of dTMP to form dTDP in both de novo and salvage pathways of dTTP synthesis. The sequence is that of Thymidylate kinase from Photobacterium profundum (strain SS9).